The chain runs to 220 residues: MNFEDQEEDMEMSGVNPPCGYDSLSGEGATSSGGGGVGRSKGVGAKIRYRECLKNHAVNIGGHAVDGCCEFMPSGEDGTLDALKCAACGCHRNFHRKETESIGGRAHRVPTYYNRPPQPHQPPGYLHLTSPAAPYRPPAASGDEEDTSNPSSSGGTTKRFRTKFTAEQKEKMLAFAERLGWRIQKHDDVAVEQFCAETGVRRQVLKIWMHNNKNSLGKKP.

Positions 1 to 11 (MNFEDQEEDME) are enriched in acidic residues. Positions 1 to 40 (MNFEDQEEDMEMSGVNPPCGYDSLSGEGATSSGGGGVGRS) are disordered. Positions 31-40 (SSGGGGVGRS) are enriched in gly residues. The segment at 49–98 (YRECLKNHAVNIGGHAVDGCCEFMPSGEDGTLDALKCAACGCHRNFHRKE) adopts a ZF-HD dimerization-type zinc-finger fold. Residues 100-160 (ESIGGRAHRV…SSSGGTTKRF (61 aa)) form a disordered region. The segment at residues 157–220 (TKRFRTKFTA…NNKNSLGKKP (64 aa)) is a DNA-binding region (homeobox; atypical).

As to quaternary structure, homo or heterodimer. Interacts with ZHD1, ZHD3, ZHD4, ZHD5, ZHD6, ZHD7, ZHD8, ZHD9, ZHD10 and ZHD11. In terms of tissue distribution, mostly expressed in flowers and, to a lower extent, in inflorescence, stems and leaves.

Its subcellular location is the nucleus. Essential protein. Putative transcription factor. The chain is Zinc-finger homeodomain protein 2 (ZHD1) from Arabidopsis thaliana (Mouse-ear cress).